The chain runs to 198 residues: Large ribosomal subunit protein bL25 (198 aa).

Belongs to the bacterial ribosomal protein bL25 family. CTC subfamily. In terms of assembly, part of the 50S ribosomal subunit; part of the 5S rRNA/L5/L18/L25 subcomplex. Contacts the 5S rRNA. Binds to the 5S rRNA independently of L5 and L18.

This is one of the proteins that binds to the 5S RNA in the ribosome where it forms part of the central protuberance. The sequence is that of Large ribosomal subunit protein bL25 from Streptomyces coelicolor (strain ATCC BAA-471 / A3(2) / M145).